The chain runs to 418 residues: Alpha-1-antitrypsin (418 aa).

Positions 1 to 24 are cleaved as a signal peptide; the sequence is MPSSVSWGILLLAGLCCLVPVSLA. Ser38 carries the phosphoserine modification. N-linked (GlcNAc...) asparagine glycosylation is found at Asn70, Asn107, and Asn271. Residues 373-392 form an RCL region; that stretch reads GAMFLEAIPMSIPPEVKFNK. Ser383 bears the Phosphoserine mark.

It belongs to the serpin family. In terms of assembly, interacts with CELA2A. Interacts with ERGIC3 and LMAN1/ERGIC53. Interacts with PRSS1/Trypsin. In terms of tissue distribution, plasma.

The protein localises to the secreted. Its function is as follows. Inhibitor of serine proteases. Its primary target is elastase, but it also has a moderate affinity for plasmin and thrombin. Inhibits trypsin, chymotrypsin and plasminogen activator. This is Alpha-1-antitrypsin (SERPINA1) from Pongo abelii (Sumatran orangutan).